A 115-amino-acid polypeptide reads, in one-letter code: uncharacterized protein (115 aa).

2 helical membrane passes run 11 to 31 (FLYL…LVWN) and 85 to 105 (GYII…YALI).

To M.thermoautotrophicum MTH1706.

The protein resides in the cell membrane. This is an uncharacterized protein from Methanocaldococcus jannaschii (strain ATCC 43067 / DSM 2661 / JAL-1 / JCM 10045 / NBRC 100440) (Methanococcus jannaschii).